Here is a 701-residue protein sequence, read N- to C-terminus: Probable cytosolic oligopeptidase A (701 aa).

At A2 the chain carries N-acetylalanine. Positions 148-194 (IALEDDKREEFNKIEQELEKLSHKFSENVLDATKKFEKLITDKKEIE) form a coiled coil. H483 serves as a coordination point for Zn(2+). E484 is an active-site residue. H487 and E513 together coordinate Zn(2+). A substrate-binding site is contributed by 615 to 621 (HIFAGGY).

Belongs to the peptidase M3 family. It depends on Zn(2+) as a cofactor.

The protein resides in the cytoplasm. Its subcellular location is the cytosol. It carries out the reaction Hydrolysis of oligopeptides, with broad specificity. Gly or Ala commonly occur as P1 or P1' residues, but more distant residues are also important, as is shown by the fact that Z-Gly-Pro-Gly-|-Gly-Pro-Ala is cleaved, but not Z-(Gly)(5).. Its activity is regulated as follows. Inhibited by salicylic acid. Its function is as follows. Oligopeptidase that may be involved in the degradation of proteasome-generated peptides. Binds salicylic acid. This is Probable cytosolic oligopeptidase A from Arabidopsis thaliana (Mouse-ear cress).